The following is a 224-amino-acid chain: Dickkopf-related protein 4 (224 aa).

An N-terminal signal peptide occupies residues 1 to 18 (MVAAVLLGLSWLCSPLGA). Positions 41–90 (CLSDTDCNTRKFCLQPRDEKPFCATCRGLRRRCQRDAMCCPGTLCVNDVC) are DKK-type Cys-1. The tract at residues 109-139 (GTHAEGTTGHPVQENQPKRKPSIKKSQGRKG) is disordered. Residues 126-136 (KRKPSIKKSQG) show a composition bias toward basic residues. Disulfide bonds link C145-C157, C151-C166, C156-C194, C176-C202, and C196-C218. Positions 145–218 (CLRTFDCGPG…NRQHARLRVC (74 aa)) are DKK-type Cys-2.

It belongs to the dickkopf family. In terms of assembly, interacts with LRP5 and LRP6. Post-translationally, appears to be not glycosylated. Can be proteolytically processed by a furin-like protease. In terms of tissue distribution, expressed in cerebellum, T-cells, esophagus and lung.

The protein localises to the secreted. Functionally, antagonizes canonical Wnt signaling by inhibiting LRP5/6 interaction with Wnt and by forming a ternary complex with the transmembrane protein KREMEN that promotes internalization of LRP5/6. DKKs play an important role in vertebrate development, where they locally inhibit Wnt regulated processes such as antero-posterior axial patterning, limb development, somitogenesis and eye formation. In the adult, Dkks are implicated in bone formation and bone disease, cancer and Alzheimer disease. In Homo sapiens (Human), this protein is Dickkopf-related protein 4 (DKK4).